A 537-amino-acid chain; its full sequence is CTP synthase (537 aa).

Positions 1–268 (MGETKYIFVT…DSTILEKMGL (268 aa)) are amidoligase domain. Residue Ser-15 coordinates CTP. Ser-15 provides a ligand contact to UTP. 16-21 (SLGKGI) contributes to the ATP binding site. Tyr-56 lines the L-glutamine pocket. Asp-73 is an ATP binding site. Asp-73 and Glu-143 together coordinate Mg(2+). Residues 150–152 (DIE), 189–194 (KTKPTQ), and Lys-225 contribute to the CTP site. UTP-binding positions include 189 to 194 (KTKPTQ) and Lys-225. A Glutamine amidotransferase type-1 domain is found at 296–537 (NIALVGKYDL…VKAAIENEKN (242 aa)). An L-glutamine-binding site is contributed by Gly-357. The active-site Nucleophile; for glutamine hydrolysis is Cys-384. L-glutamine-binding positions include 385–388 (LGMQ), Glu-408, and Arg-465. Residues His-510 and Glu-512 contribute to the active site.

Belongs to the CTP synthase family. As to quaternary structure, homotetramer.

The catalysed reaction is UTP + L-glutamine + ATP + H2O = CTP + L-glutamate + ADP + phosphate + 2 H(+). It catalyses the reaction L-glutamine + H2O = L-glutamate + NH4(+). It carries out the reaction UTP + NH4(+) + ATP = CTP + ADP + phosphate + 2 H(+). It functions in the pathway pyrimidine metabolism; CTP biosynthesis via de novo pathway; CTP from UDP: step 2/2. Its activity is regulated as follows. Allosterically activated by GTP, when glutamine is the substrate; GTP has no effect on the reaction when ammonia is the substrate. The allosteric effector GTP functions by stabilizing the protein conformation that binds the tetrahedral intermediate(s) formed during glutamine hydrolysis. Inhibited by the product CTP, via allosteric rather than competitive inhibition. Its function is as follows. Catalyzes the ATP-dependent amination of UTP to CTP with either L-glutamine or ammonia as the source of nitrogen. Regulates intracellular CTP levels through interactions with the four ribonucleotide triphosphates. This chain is CTP synthase, found in Bacteroides thetaiotaomicron (strain ATCC 29148 / DSM 2079 / JCM 5827 / CCUG 10774 / NCTC 10582 / VPI-5482 / E50).